A 389-amino-acid polypeptide reads, in one-letter code: Ethanolamine-phosphate cytidylyltransferase (389 aa).

The disordered stretch occupies residues 1–20 (MIRNGRGAAGGAEQPGPGGR). CTP contacts are provided by residues 221–222 (AF), 229–232 (HVDF), lysine 259, 307–310 (HGKT), and 336–340 (SGSNL). At serine 338 the chain carries Phosphoserine. Phosphothreonine occurs at positions 341 and 342.

The protein belongs to the cytidylyltransferase family. Strongest expression in liver, heart, and skeletal muscle.

The catalysed reaction is phosphoethanolamine + CTP + H(+) = CDP-ethanolamine + diphosphate. Its pathway is phospholipid metabolism; phosphatidylethanolamine biosynthesis; phosphatidylethanolamine from ethanolamine: step 2/3. In terms of biological role, ethanolamine-phosphate cytidylyltransferase that catalyzes the second step in the synthesis of phosphatidylethanolamine (PE) from ethanolamine via the CDP-ethanolamine pathway. Phosphatidylethanolamine is a dominant inner-leaflet phospholipid in cell membranes, where it plays a role in membrane function by structurally stabilizing membrane-anchored proteins, and participates in important cellular processes such as cell division, cell fusion, blood coagulation, and apoptosis. The polypeptide is Ethanolamine-phosphate cytidylyltransferase (PCYT2) (Homo sapiens (Human)).